Reading from the N-terminus, the 461-residue chain is Chromosomal replication initiator protein DnaA (461 aa).

The tract at residues 1–87 is domain I, interacts with DnaA modulators; that stretch reads MAVSLWQQCI…IGSRPSAKPV (87 aa). Residues 87–124 form a domain II region; that stretch reads VVQATAAVRTSRPVTREVTKPSFNTPHAEPMANANHRS. Residues 99–125 form a disordered region; sequence PVTREVTKPSFNTPHAEPMANANHRSN. Residues 125–341 are domain III, AAA+ region; the sequence is NINPTYQFDN…GALNRVIANA (217 aa). The ATP site is built by glycine 169, glycine 171, lysine 172, and threonine 173. The segment at 342–461 is domain IV, binds dsDNA; sequence NFTGRPITID…YANLIRTLSS (120 aa).

It belongs to the DnaA family. Oligomerizes as a right-handed, spiral filament on DNA at oriC.

It is found in the cytoplasm. Its function is as follows. Plays an essential role in the initiation and regulation of chromosomal replication. ATP-DnaA binds to the origin of replication (oriC) to initiate formation of the DNA replication initiation complex once per cell cycle. Binds the DnaA box (a 9 base pair repeat at the origin) and separates the double-stranded (ds)DNA. Forms a right-handed helical filament on oriC DNA; dsDNA binds to the exterior of the filament while single-stranded (ss)DNA is stabiized in the filament's interior. The ATP-DnaA-oriC complex binds and stabilizes one strand of the AT-rich DNA unwinding element (DUE), permitting loading of DNA polymerase. After initiation quickly degrades to an ADP-DnaA complex that is not apt for DNA replication. Binds acidic phospholipids. The sequence is that of Chromosomal replication initiator protein DnaA from Shewanella pealeana (strain ATCC 700345 / ANG-SQ1).